Consider the following 95-residue polypeptide: Putative regulatory protein STH1338 (95 aa).

Belongs to the RemA family.

The chain is Putative regulatory protein STH1338 from Symbiobacterium thermophilum (strain DSM 24528 / JCM 14929 / IAM 14863 / T).